The sequence spans 2599 residues: Protein DOP1 homolog (2599 aa).

2 disordered regions span residues 532–571 and 595–701; these read EQSGGSSSDEKITMNSASDAGKTEAGAQGNSLEKSKSDSR and ASNQ…LDEE. Composition is skewed to polar residues over residues 534–549, 595–604, and 625–636; these read SGGSSSDEKITMNSAS, ASNQSVGRQS, and ASDTGQQSSSDL. Position 753 is a phosphoserine (S753). Positions 1240 to 1251 are enriched in basic and acidic residues; the sequence is PRIEIPHKETPL. Disordered stretches follow at residues 1240-1316 and 1347-1368; these read PRIE…SSSA and TYRLTREKTPGENSLNSLEQKD. Residues 1264–1282 are compositionally biased toward polar residues; it reads QPSQEQPANQPDNSLQYDQ. Over residues 1297 to 1309 the composition is skewed to basic and acidic residues; sequence SELRETSIEKEDS. T1355 bears the Phosphothreonine mark. Phosphoserine is present on residues S1360, S1363, and S1371. Positions 1409 to 1442 are disordered; the sequence is CISKTSTDSNISGSHVEQPEQEEETEPGTESTIN. Residues 1410–1423 show a composition bias toward polar residues; the sequence is ISKTSTDSNISGSH. Position 2525 is a phosphoserine (S2525).

Belongs to the DOP1 family.

The protein localises to the golgi apparatus membrane. Its function is as follows. May be involved in protein traffic between late Golgi and early endosomes. The chain is Protein DOP1 homolog from Drosophila melanogaster (Fruit fly).